The following is a 211-amino-acid chain: Uracil phosphoribosyltransferase (211 aa).

Residue 30–34 (KGLVR) participates in GTP binding. 5-phospho-alpha-D-ribose 1-diphosphate is bound by residues R79, R104, and 133 to 141 (DPMLATGTT). Residues I197 and 202–204 (GDA) contribute to the uracil site. 5-phospho-alpha-D-ribose 1-diphosphate is bound at residue D203.

Belongs to the UPRTase family. Mg(2+) serves as cofactor.

The catalysed reaction is UMP + diphosphate = 5-phospho-alpha-D-ribose 1-diphosphate + uracil. The protein operates within pyrimidine metabolism; UMP biosynthesis via salvage pathway; UMP from uracil: step 1/1. Allosterically activated by GTP. Its function is as follows. Catalyzes the conversion of uracil and 5-phospho-alpha-D-ribose 1-diphosphate (PRPP) to UMP and diphosphate. The chain is Uracil phosphoribosyltransferase from Pyrobaculum arsenaticum (strain DSM 13514 / JCM 11321 / PZ6).